We begin with the raw amino-acid sequence, 389 residues long: Sterol methyltransferase-like 2 (389 aa).

Residues 25–45 form a helical membrane-spanning segment; the sequence is LSWKGAVGLVAATGIGYVLII.

It belongs to the class I-like SAM-binding methyltransferase superfamily. Erg6/SMT family.

It localises to the microsome membrane. Functionally, unable to convert squalene, botryococcene, cycloartenol, zymosterol or lanosterol to mono-, di-, tri- or tetramethylated derivatives. The protein is Sterol methyltransferase-like 2 (SMT-2) of Botryococcus braunii (Green alga).